A 321-amino-acid chain; its full sequence is Acetyl-coenzyme A carboxylase carboxyl transferase subunit alpha (321 aa).

The CoA carboxyltransferase C-terminal domain maps to 39–293 (RLQQKSQTLA…RRALGDSLRQ (255 aa)).

It belongs to the AccA family. In terms of assembly, acetyl-CoA carboxylase is a heterohexamer composed of biotin carboxyl carrier protein (AccB), biotin carboxylase (AccC) and two subunits each of ACCase subunit alpha (AccA) and ACCase subunit beta (AccD).

The protein localises to the cytoplasm. It catalyses the reaction N(6)-carboxybiotinyl-L-lysyl-[protein] + acetyl-CoA = N(6)-biotinyl-L-lysyl-[protein] + malonyl-CoA. It functions in the pathway lipid metabolism; malonyl-CoA biosynthesis; malonyl-CoA from acetyl-CoA: step 1/1. In terms of biological role, component of the acetyl coenzyme A carboxylase (ACC) complex. First, biotin carboxylase catalyzes the carboxylation of biotin on its carrier protein (BCCP) and then the CO(2) group is transferred by the carboxyltransferase to acetyl-CoA to form malonyl-CoA. This chain is Acetyl-coenzyme A carboxylase carboxyl transferase subunit alpha, found in Bordetella avium (strain 197N).